A 332-amino-acid polypeptide reads, in one-letter code: Mediator of RNA polymerase II transcription subunit 3 (332 aa).

Disordered stretches follow at residues 125-206 and 221-242; these read EPVR…PGAT and SPLN…TTPS. Low complexity predominate over residues 132 to 143; the sequence is SPSYRRPSNRSS. The segment covering 144–153 has biased composition (polar residues); that stretch reads ADTPSSNAPT. Composition is skewed to low complexity over residues 155–166 and 184–200; these read SAAVVSGAALVA and PSVS…SGPA.

Belongs to the Mediator complex subunit 3 family. In terms of assembly, component of the Mediator complex.

Its subcellular location is the nucleus. Functionally, component of the Mediator complex, a coactivator involved in regulated gene transcription of nearly all RNA polymerase II-dependent genes. Mediator functions as a bridge to convey information from gene-specific regulatory proteins to the basal RNA polymerase II transcription machinery. Mediator is recruited to promoters by direct interactions with regulatory proteins and serves as a scaffold for the assembly of a functional preinitiation complex with RNA polymerase II and the general transcription factors. The protein is Mediator of RNA polymerase II transcription subunit 3 (PGD1) of Eremothecium gossypii (strain ATCC 10895 / CBS 109.51 / FGSC 9923 / NRRL Y-1056) (Yeast).